Consider the following 132-residue polypeptide: Small ribosomal subunit protein uS11 (132 aa).

It belongs to the universal ribosomal protein uS11 family. Part of the 30S ribosomal subunit. Interacts with proteins S7 and S18. Binds to IF-3.

Its function is as follows. Located on the platform of the 30S subunit, it bridges several disparate RNA helices of the 16S rRNA. Forms part of the Shine-Dalgarno cleft in the 70S ribosome. The sequence is that of Small ribosomal subunit protein uS11 from Lachnoclostridium phytofermentans (strain ATCC 700394 / DSM 18823 / ISDg) (Clostridium phytofermentans).